The sequence spans 363 residues: Homeobox protein Hox-A2a (363 aa).

Disordered regions lie at residues 30 to 88 (DSFQ…LPPE), 98 to 117 (SKRN…GPVC), 189 to 220 (RMKH…SDEE), and 268 to 308 (DKNL…LDVS). Over residues 31-44 (SFQSSSIKSSTLSR) the composition is skewed to polar residues. Positions 88-93 (EYPWMR) match the Antp-type hexapeptide motif. The segment covering 103 to 113 (LPNSTTTTISN) has biased composition (polar residues). The segment at residues 137 to 196 (SRRLRTAYTNTQLLELEKEFHFNKYLCRPRRVEIAALLDLTERQVKVWFQNRRMKHKRQT) is a DNA-binding region (homeobox).

Belongs to the Antp homeobox family. Proboscipedia subfamily.

It localises to the nucleus. Its function is as follows. Sequence-specific transcription factor which is part of a developmental regulatory system that provides cells with specific positional identities on the anterior-posterior axis. This is Homeobox protein Hox-A2a (hoxa2a) from Takifugu rubripes (Japanese pufferfish).